Here is a 182-residue protein sequence, read N- to C-terminus: Probable peptidyl-prolyl cis-trans isomerase A (182 aa).

Residues 13–181 (ATATATLHTN…DPVVIESITI (169 aa)) enclose the PPIase cyclophilin-type domain.

This sequence belongs to the cyclophilin-type PPIase family.

It localises to the cytoplasm. It catalyses the reaction [protein]-peptidylproline (omega=180) = [protein]-peptidylproline (omega=0). In terms of biological role, PPIases accelerate the folding of proteins. It catalyzes the cis-trans isomerization of proline imidic peptide bonds in oligopeptides. The sequence is that of Probable peptidyl-prolyl cis-trans isomerase A (ppiA) from Mycobacterium bovis (strain ATCC BAA-935 / AF2122/97).